A 579-amino-acid chain; its full sequence is YTH domain-containing family protein 2 (579 aa).

The disordered stretch occupies residues 1-45 (MSASSLLEQRPKGQGNKVQNGSVHQKDGLNDDDFEPYLSPQARPN). Ser-2 is modified (N-acetylserine). A phosphoserine mark is found at Ser-2, Ser-4, Ser-5, Ser-22, Ser-39, and Ser-196. The tract at residues 2-384 (SASSLLEQRP…QAGSGSTPSE (383 aa)) is localization to mRNA processing bodies (P-bodies). The tract at residues 247 to 387 (AKQQPKLKTK…SGSTPSEPHP (141 aa)) is disordered. The segment covering 291–316 (ALVQNIGQPTQGSPQPVGQQANNSPP) has biased composition (polar residues). The span at 337 to 349 (AQLSVQQQAAQPT) shows a compositional bias: low complexity. At Ser-359 the chain carries Phosphoserine. Gly residues predominate over residues 359 to 371 (SGFGHNGVDGNGV). Polar residues predominate over residues 372 to 383 (GQSQAGSGSTPS). Residues 385 to 579 (PHPVLEKLRS…VKKERQGRGK (195 aa)) are interaction with m6A-containing mRNAs. Residue Ser-394 is modified to Phosphoserine. A YTH domain is found at 410–544 (GRVFIIKSYS…EKAKQVLKII (135 aa)). RNA-binding positions include 416-418 (KSY), Asp-422, 432-433 (WC), Asn-462, Trp-486, and Trp-491.

Belongs to the YTHDF family. YTHDF2 subfamily. Interacts with CNOT1; interaction is direct and promotes recruitment of the CCR4-NOT complex. Interacts with YTHDF3. Interacts with RIDA/HRSP12; interaction leads to recruitment of the ribonuclease P/MRP complex. Post-translationally, ubiquitinated by the SCF(SKP2) complex, leading to its degradation. Highly expressed in induced pluripotent stem cells (iPSCs) and down-regulated during neural differentiation.

Its subcellular location is the cytoplasm. The protein resides in the cytosol. It localises to the P-body. The protein localises to the stress granule. It is found in the nucleus. In terms of biological role, specifically recognizes and binds N6-methyladenosine (m6A)-containing RNAs, and regulates their stability. M6A is a modification present at internal sites of mRNAs and some non-coding RNAs and plays a role in mRNA stability and processing. Acts as a regulator of mRNA stability by promoting degradation of m6A-containing mRNAs via interaction with the CCR4-NOT and ribonuclease P/MRP complexes, depending on the context. The YTHDF paralogs (YTHDF1, YTHDF2 and YTHDF3) share m6A-containing mRNAs targets and act redundantly to mediate mRNA degradation and cellular differentiation. M6A-containing mRNAs containing a binding site for RIDA/HRSP12 (5'-GGUUC-3') are preferentially degraded by endoribonucleolytic cleavage: cooperative binding of RIDA/HRSP12 and YTHDF2 to transcripts leads to recruitment of the ribonuclease P/MRP complex. Other m6A-containing mRNAs undergo deadenylation via direct interaction between YTHDF2 and CNOT1, leading to recruitment of the CCR4-NOT and subsequent deadenylation of m6A-containing mRNAs. Required maternally to regulate oocyte maturation: probably acts by binding to m6A-containing mRNAs, thereby regulating maternal transcript dosage during oocyte maturation, which is essential for the competence of oocytes to sustain early zygotic development. Also required during spermatogenesis: regulates spermagonial adhesion by promoting degradation of m6A-containing transcripts coding for matrix metallopeptidases. Also involved in hematopoietic stem cells specification by binding to m6A-containing mRNAs, leading to promote their degradation. Also acts as a regulator of neural development by promoting m6A-dependent degradation of neural development-related mRNA targets. Inhibits neural specification of induced pluripotent stem cells by binding to methylated neural-specific mRNAs and promoting their degradation, thereby restraining neural differentiation. Regulates circadian regulation of hepatic lipid metabolism: acts by promoting m6A-dependent degradation of PPARA transcripts. Regulates the innate immune response to infection by inhibiting the type I interferon response: acts by binding to m6A-containing IFNB transcripts and promoting their degradation. May also act as a promoter of cap-independent mRNA translation following heat shock stress: upon stress, relocalizes to the nucleus and specifically binds mRNAs with some m6A methylation mark at their 5'-UTR, protecting demethylation of mRNAs by FTO, thereby promoting cap-independent mRNA translation. Regulates mitotic entry by promoting the phase-specific m6A-dependent degradation of WEE1 transcripts. Promotes formation of phase-separated membraneless compartments, such as P-bodies or stress granules, by undergoing liquid-liquid phase separation upon binding to mRNAs containing multiple m6A-modified residues: polymethylated mRNAs act as a multivalent scaffold for the binding of YTHDF proteins, juxtaposing their disordered regions and thereby leading to phase separation. The resulting mRNA-YTHDF complexes then partition into different endogenous phase-separated membraneless compartments, such as P-bodies, stress granules or neuronal RNA granules. May also recognize and bind RNAs modified by C5-methylcytosine (m5C) and act as a regulator of rRNA processing. (Microbial infection) Promotes viral gene expression and replication of polyomavirus SV40: acts by binding to N6-methyladenosine (m6A)-containing viral RNAs. Functionally, (Microbial infection) Promotes viral gene expression and virion production of kaposis sarcoma-associated herpesvirus (KSHV) at some stage of the KSHV life cycle (in iSLK.219 and iSLK.BAC16 cells). Acts by binding to N6-methyladenosine (m6A)-containing viral RNAs. This chain is YTH domain-containing family protein 2, found in Homo sapiens (Human).